The sequence spans 96 residues: Co-chaperonin GroES (96 aa).

This sequence belongs to the GroES chaperonin family. Heptamer of 7 subunits arranged in a ring. Interacts with the chaperonin GroEL.

The protein localises to the cytoplasm. In terms of biological role, together with the chaperonin GroEL, plays an essential role in assisting protein folding. The GroEL-GroES system forms a nano-cage that allows encapsulation of the non-native substrate proteins and provides a physical environment optimized to promote and accelerate protein folding. GroES binds to the apical surface of the GroEL ring, thereby capping the opening of the GroEL channel. In Nitrosospira multiformis (strain ATCC 25196 / NCIMB 11849 / C 71), this protein is Co-chaperonin GroES.